We begin with the raw amino-acid sequence, 198 residues long: Thioredoxin reductase-like selenoprotein T homolog CG3887 (198 aa).

Positions 1–25 (MERLTGRNVALLVLCLCAGYALVFA) are cleaved as a signal peptide. A disulfide bond links cysteine 49 and cysteine 52.

Belongs to the SelWTH family. SELT subfamily.

The enzyme catalyses [thioredoxin]-dithiol + NADP(+) = [thioredoxin]-disulfide + NADPH + H(+). Functionally, probably has thioredoxin reductase-like oxidoreductase activity. The chain is Thioredoxin reductase-like selenoprotein T homolog CG3887 from Drosophila melanogaster (Fruit fly).